The chain runs to 419 residues: Dynein regulatory complex protein 9 (419 aa).

Disordered regions lie at residues 25-45 and 394-419; these read TGEPPEAAEEDLDYEEEEETS and NFKMPKKDKDDSKDSKGKEKEKRRKK. Positions 30 to 45 are enriched in acidic residues; it reads EAAEEDLDYEEEEETS. An IQ domain is found at 372–401; sequence ELRSIVKLQAWWRGSVVRKEIGNFKMPKKD. Basic and acidic residues predominate over residues 394 to 413; that stretch reads NFKMPKKDKDDSKDSKGKEK.

The protein belongs to the DRC9 family. As to quaternary structure, component of the nexin-dynein regulatory complex (N-DRC). Interacts (via IQ domain) with CALM when calcium levels are low. Does not interact with CALM in the presence of Ca(2+). Interacts with the HSP70 proteins HSPA1L and HSPA8. May form a complex with CAMK4 and HSP70. In terms of tissue distribution, expressed in the testes (at protein level). Also detected in oviduct (at protein level). Also detected in the trachea.

The protein resides in the cytoplasm. Its subcellular location is the cell projection. The protein localises to the cilium. It is found in the flagellum. It localises to the cytoskeleton. The protein resides in the flagellum axoneme. Functionally, component of the nexin-dynein regulatory complex (N-DRC), a key regulator of ciliary/flagellar motility which maintains the alignment and integrity of the distal axoneme and regulates microtubule sliding in motile axonemes. Binds calmodulin when cellular Ca(2+) levels are low and thereby contributes to the regulation of calcium and calmodulin-dependent protein kinase IV (CAMK4) activity; contributes to the regulation of CAMK4 signaling cascades. Required for normal axoneme assembly in sperm flagella, normal sperm tail formation and for male fertility. This is Dynein regulatory complex protein 9 (Iqcg) from Mus musculus (Mouse).